The sequence spans 229 residues: Putative germin-like protein 3-4 (229 aa).

The N-terminal stretch at 1–31 is a signal peptide; sequence MEHSFKTITAGVVFVVLLLQQAPVLIRATDA. Cysteine 38 and cysteine 53 are oxidised to a cystine. The region spanning 67 to 219 is the Cupin type-1 domain; the sequence is SKIATGGDVN…ALRVDTGVVE (153 aa). N-linked (GlcNAc...) asparagine glycans are attached at residues asparagine 80 and asparagine 83. Mn(2+)-binding residues include histidine 116, histidine 118, glutamate 123, and histidine 165.

It belongs to the germin family. Oligomer (believed to be a pentamer but probably hexamer).

It localises to the secreted. The protein localises to the extracellular space. Its subcellular location is the apoplast. In terms of biological role, may play a role in plant defense. Probably has no oxalate oxidase activity even if the active site is conserved. The protein is Putative germin-like protein 3-4 of Oryza sativa subsp. japonica (Rice).